The sequence spans 324 residues: MAAAGGGATRGARMLAERIRAERKVLEGAARETSRKNAPTIVYLRELKSQVVREDPELVLVNKPHGLPVHGGPTVERSVASLLPALAKHHFGWKAEPLKLCHRLDRDTTGALILARTTEAAERVQQALREREVHRVYWALCLGTPSPREGILDIPIMEKETSGPQKHYKMALSPRFRVSEEGAVERVRVPRSAHEAVTRYRTLGAASGASLVELHPITGVKHQLRVHLALGLNCPILGDHKYSHWGRLAPQKPPDSVLRALGLTVPQARTLSLHLHAVQLTLPSSDGSTPIVLQCPLPYTFRKTLRKLRIPPPDLESLQPPPTD.

A mitochondrion-targeting transit peptide spans 1–11 (MAAAGGGATRG). The active site involves Asp105.

This sequence belongs to the pseudouridine synthase RluA family.

It localises to the mitochondrion matrix. Its subcellular location is the nucleus. The protein localises to the cytoplasm. It carries out the reaction uridine in 5S rRNA = pseudouridine in 5S rRNA. The enzyme catalyses a uridine in tRNA = a pseudouridine in tRNA. It catalyses the reaction a uridine in mRNA = a pseudouridine in mRNA. Catalyzes uridine to pseudouridine isomerization (pseudouridylation) of different mitochondrial RNA substrates. Acts on position 1397 in 16S mitochondrial ribosomal RNA (16S mt-rRNA). This modification is required for the assembly of 16S mt-rRNA into a functional mitochondrial ribosome. Acts on position 39 in mitochondrial tRNA(Phe). Also catalyzes pseudouridylation of mRNAs in nucleus: acts as a regulator of pre-mRNA splicing by mediating pseudouridylation of pre-mRNAs at locations associated with alternatively spliced regions. Pseudouridylation of pre-mRNAs near splice sites directly regulates mRNA splicing and mRNA 3'-end processing. This Xenopus tropicalis (Western clawed frog) protein is Pseudouridylate synthase RPUSD4, mitochondrial.